The primary structure comprises 128 residues: Anti-sigma-F factor antagonist RsfA (128 aa).

The STAS domain maps to 17-128 (LKATIQHHDS…PTTESALSAT (112 aa)). An intrachain disulfide couples cysteine 73 to cysteine 109.

It belongs to the anti-sigma-factor antagonist family. As to quaternary structure, monomer. Interacts with anti-sigma-F factor RsbW (UsfX).

Functionally, positive, redox-sensitive regulator of sigma-F (SigF) activity. When reduced binds to anti-sigma-F factor RsbW (UsfX) preventing its binding to SigF, thus activating transcription. In Mycobacterium tuberculosis (strain CDC 1551 / Oshkosh), this protein is Anti-sigma-F factor antagonist RsfA (rsfA).